We begin with the raw amino-acid sequence, 385 residues long: Probable splicing factor YJU2B (385 aa).

Residues 1–26 (MGERKGQNKYYPPDFNPEKHGSLNRY) are disordered. Ser40 carries the phosphoserine modification. A coiled-coil region spans residues 182–214 (LNSMLRRHFREKKKAMQEEEEKDQALQAKASLA). The segment at 257–385 (PSAQGPSASS…VADYSDSESE (129 aa)) is disordered. Residues 258-271 (SAQGPSASSSKASS) are compositionally biased toward low complexity. Ser306 is modified (phosphoserine). Positions 359-373 (GSSQEDLLNPNTPNA) are enriched in polar residues.

It belongs to the CWC16 family.

Its subcellular location is the nucleus. Functionally, may be involved in mRNA splicing. The protein is Probable splicing factor YJU2B (Yju2b) of Mus musculus (Mouse).